The following is a 185-amino-acid chain: Ribosome-recycling factor (185 aa).

It belongs to the RRF family.

The protein localises to the cytoplasm. Its function is as follows. Responsible for the release of ribosomes from messenger RNA at the termination of protein biosynthesis. May increase the efficiency of translation by recycling ribosomes from one round of translation to another. The sequence is that of Ribosome-recycling factor from Listeria monocytogenes serotype 4a (strain HCC23).